We begin with the raw amino-acid sequence, 190 residues long: Adenylate kinase (190 aa).

12-17 (GSGKTT) contacts ATP. The segment at 33–62 (STGDLLRAEVASGSELGKTIDSFISKGNLV) is NMP. AMP is bound by residues Thr-34, Arg-39, 60-62 (NLV), 87-90 (GYPR), and Gln-94. The interval 129-135 (GRARGAD) is LID. Arg-130 provides a ligand contact to ATP. AMP contacts are provided by Arg-132 and Arg-144. An ATP-binding site is contributed by Arg-172.

Belongs to the adenylate kinase family. Monomer.

It is found in the cytoplasm. It carries out the reaction AMP + ATP = 2 ADP. It participates in purine metabolism; AMP biosynthesis via salvage pathway; AMP from ADP: step 1/1. Functionally, catalyzes the reversible transfer of the terminal phosphate group between ATP and AMP. Plays an important role in cellular energy homeostasis and in adenine nucleotide metabolism. The chain is Adenylate kinase from Campylobacter lari (strain RM2100 / D67 / ATCC BAA-1060).